The following is a 251-amino-acid chain: Ubiquinone/menaquinone biosynthesis C-methyltransferase UbiE (251 aa).

S-adenosyl-L-methionine is bound by residues Thr74, Asp95, and 123–124 (NA).

This sequence belongs to the class I-like SAM-binding methyltransferase superfamily. MenG/UbiE family.

It catalyses the reaction a 2-demethylmenaquinol + S-adenosyl-L-methionine = a menaquinol + S-adenosyl-L-homocysteine + H(+). It carries out the reaction a 2-methoxy-6-(all-trans-polyprenyl)benzene-1,4-diol + S-adenosyl-L-methionine = a 5-methoxy-2-methyl-3-(all-trans-polyprenyl)benzene-1,4-diol + S-adenosyl-L-homocysteine + H(+). It participates in quinol/quinone metabolism; menaquinone biosynthesis; menaquinol from 1,4-dihydroxy-2-naphthoate: step 2/2. It functions in the pathway cofactor biosynthesis; ubiquinone biosynthesis. Its function is as follows. Methyltransferase required for the conversion of demethylmenaquinol (DMKH2) to menaquinol (MKH2) and the conversion of 2-polyprenyl-6-methoxy-1,4-benzoquinol (DDMQH2) to 2-polyprenyl-3-methyl-6-methoxy-1,4-benzoquinol (DMQH2). This Shewanella frigidimarina (strain NCIMB 400) protein is Ubiquinone/menaquinone biosynthesis C-methyltransferase UbiE.